A 550-amino-acid polypeptide reads, in one-letter code: Eukaryotic translation initiation factor 3 subunit D (550 aa).

Residues 288-302 form an RNA gate region; sequence DFDLLTVSETANEPP. Residues 526–550 are disordered; sequence PDGTFSSDEEEDDDDEDEEVEEEES. Residues 532–550 show a composition bias toward acidic residues; that stretch reads SDEEEDDDDEDEEVEEEES.

This sequence belongs to the eIF-3 subunit D family. As to quaternary structure, component of the eukaryotic translation initiation factor 3 (eIF-3) complex, which is composed of 13 subunits: eif3a, eif3b, eif3c, eif3d, eif3e, eif3f, eif3g, eif3h, eif3i, eif3j, eif3k, eif3l and eif3m.

It localises to the cytoplasm. Its function is as follows. mRNA cap-binding component of the eukaryotic translation initiation factor 3 (eIF-3) complex, which is involved in protein synthesis of a specialized repertoire of mRNAs and, together with other initiation factors, stimulates binding of mRNA and methionyl-tRNAi to the 40S ribosome. The eIF-3 complex specifically targets and initiates translation of a subset of mRNAs involved in cell proliferation. In the eIF-3 complex, eif3d specifically recognizes and binds the 7-methylguanosine cap of a subset of mRNAs. The polypeptide is Eukaryotic translation initiation factor 3 subunit D (eif3d) (Xenopus laevis (African clawed frog)).